Reading from the N-terminus, the 90-residue chain is Large ribosomal subunit protein bL31B-1 (90 aa).

Belongs to the bacterial ribosomal protein bL31 family. Type B subfamily. In terms of assembly, part of the 50S ribosomal subunit.

The sequence is that of Large ribosomal subunit protein bL31B-1 from Streptomyces coelicolor (strain ATCC BAA-471 / A3(2) / M145).